Here is a 327-residue protein sequence, read N- to C-terminus: Regulatory protein MsrR (327 aa).

Over residues 1–18 the composition is skewed to basic and acidic residues; the sequence is MDKETNDNEYRRQSEHRT. The interval 1-24 is disordered; that stretch reads MDKETNDNEYRRQSEHRTSAPKRK. Topologically, residues 1–31 are cytoplasmic; it reads MDKETNDNEYRRQSEHRTSAPKRKKKKKIRK. Residues 32 to 52 traverse the membrane as a helical; Signal-anchor for type II membrane protein segment; sequence LPIILLIVVILLIALVVYIVH. Residues 53 to 327 lie on the Extracellular side of the membrane; it reads SYNSGVEYAK…QAIKDFLDED (275 aa).

It belongs to the LytR/CpsA/Psr (LCP) family.

Its subcellular location is the cell membrane. In terms of biological role, involved in SarA attenuation. Affects resistance to oxacillin and teicoplanin, as well as the synthesis of virulence factors. This Staphylococcus aureus (strain NCTC 8325 / PS 47) protein is Regulatory protein MsrR (msrR).